Consider the following 59-residue polypeptide: Small integral membrane protein 30 (59 aa).

A signal peptide spans 1-24 (MNSVSTQLILVLASLLLILPVVEA). Residues 25–29 (VEAGD) lie on the Extracellular side of the membrane. Residues 30–50 (AIALLLGVVLSITGICACLGI) form a helical membrane-spanning segment. Topologically, residues 51 to 59 (YARKRNGQM) are cytoplasmic.

Interacts (via transmembrane domain) with antiviral protein MAVS (via transmembrane domain); the interaction disrupts MAVS interaction with RIGI and inhibits MAVS aggregation, resulting in the repression of type I interferon signaling and innate immune responses.

The protein resides in the endoplasmic reticulum membrane. The protein localises to the mitochondrion membrane. In terms of biological role, negatively regulates antiviral innate immune responses. Disrupts the interaction of antiviral protein MAVS with innate immune receptor RIGI and inhibits MAVS aggregation, resulting in the repression of type I interferon signaling and innate immune responses. This is Small integral membrane protein 30 from Mus musculus (Mouse).